Consider the following 209-residue polypeptide: Orotate phosphoribosyltransferase (209 aa).

Residues R96, K100, H102, and 122-130 (EDLISTGGS) contribute to the 5-phospho-alpha-D-ribose 1-diphosphate site. S126 contributes to the orotate binding site.

Belongs to the purine/pyrimidine phosphoribosyltransferase family. PyrE subfamily. As to quaternary structure, homodimer. The cofactor is Mg(2+).

It catalyses the reaction orotidine 5'-phosphate + diphosphate = orotate + 5-phospho-alpha-D-ribose 1-diphosphate. It functions in the pathway pyrimidine metabolism; UMP biosynthesis via de novo pathway; UMP from orotate: step 1/2. Catalyzes the transfer of a ribosyl phosphate group from 5-phosphoribose 1-diphosphate to orotate, leading to the formation of orotidine monophosphate (OMP). This is Orotate phosphoribosyltransferase from Lactococcus lactis subsp. cremoris (strain SK11).